The sequence spans 691 residues: F-box/LRR-repeat protein 5 (691 aa).

The hemerythrin-like stretch occupies residues 1–159 (MAPFPEEVDV…IKKKVIAQHC (159 aa)). Fe(3+) is bound by residues His-15, His-57, Glu-58, Glu-61, His-80, His-126, and Glu-130. An F-box domain is found at 202 to 248 (STGITHLPPEVMLSIFSYLNPQELCRCSQVSMKWSQLTKTGSLWKHL). 7 LRR repeats span residues 340-364 (SSAV…LDLT), 365-392 (QTDI…DLSG), 393-418 (CEKI…QSGF), 479-508 (LWML…CVVE), 576-607 (TRLP…SLSG), 608-635 (CYQI…NLSG), and 636-661 (CLTI…YFYY). Cys-662, Cys-676, Cys-686, and Cys-687 together coordinate [2Fe-2S] cluster.

In terms of assembly, part of a SCF (SKP1-cullin-F-box) protein ligase complex. Interacts with ACO1/IRP1, IREB2/IRP2; the interaction depends on the [2Fe-2S] cluster. Interacts with DCTN1/p150-glued. Requires [2Fe-2S] cluster as cofactor. In terms of processing, polybiquitinated upon iron and oxygen depletion, leading to its degradation by the proteasome. Ubiquitination is regulated by the hemerythrin-like region that acts as an oxygen and iron sensor. Undergoes constitutive ubiquitin-dependent degradation at the steady state by HERC2.

The protein resides in the cytoplasm. It is found in the perinuclear region. Its subcellular location is the nucleus. It functions in the pathway protein modification; protein ubiquitination. Its activity is regulated as follows. An iron-sulfur cluster promotes IRP2 polyubiquitination and degradation in response to both iron and oxygen concentrations. Its function is as follows. Component of some SCF (SKP1-cullin-F-box) protein ligase complex that plays a central role in iron homeostasis by promoting the ubiquitination and subsequent degradation of IREB2/IRP2. The C-terminal domain of FBXL5 contains a redox-sensitive [2Fe-2S] cluster that, upon oxidation, promotes binding to IRP2 to effect its oxygen-dependent degradation. Under iron deficiency conditions, the N-terminal hemerythrin-like (Hr) region, which contains a diiron metal center, cannot bind iron and undergoes conformational changes that destabilize the FBXL5 protein and cause its ubiquitination and degradation. When intracellular iron levels start rising, the Hr region is stabilized. Additional increases in iron levels facilitate the assembly and incorporation of a redox active [2Fe-2S] cluster in the C-terminal domain. Only when oxygen level is high enough to maintain the cluster in its oxidized state can FBXL5 recruit IRP2 as a substrate for polyubiquination and degradation. Promotes ubiquitination and subsequent degradation of the dynactin complex component DCTN1. Within the nucleus, promotes the ubiquitination of SNAI1; preventing its interaction with DNA and promoting its degradation. Negatively regulates DNA damage response by mediating the ubiquitin-proteasome degradation of the DNA repair protein NABP2. The protein is F-box/LRR-repeat protein 5 (FBXL5) of Pongo abelii (Sumatran orangutan).